Reading from the N-terminus, the 304-residue chain is Putative ankyrin repeat protein R598 (304 aa).

ANK repeat units lie at residues 7-36 (NIVT…SINL), 77-107 (YIST…PVDF), 122-151 (GSNH…DVNA), 152-181 (HNYL…NVLR), 183-209 (ANGN…EIDM), 210-239 (NLSR…DINK), and 265-293 (FDFT…NVDI).

The protein is Putative ankyrin repeat protein R598 of Acanthamoeba polyphaga (Amoeba).